The following is a 218-amino-acid chain: MNCRSEVLEVSVEGRQVEEAMLAVLHTVLLHRSTGKFHYKKEGTYSIGTVGTQDVDCDFIDFTYVRVSSEELDRALRKVVGEFRDALRNSGGDGLGQMSLEFYQKKKSRWPFSDECIPWEVWTVKVHVVALATEQERQICREKVGEKLCEKIINIVEVMNRHEYLPKMPTQSEVDNVFDTGLRDVQPYLYKISFQITDALGSSVTTTMRRLIKDTLAL.

Residues 152 to 156 (IINIV) are important for interaction with ATG13.

The protein belongs to the ATG101 family. Interacts with ATG13. Associates with a complex composed of ATG13, ULK1 and RB1CC1; the association with this complex requires the presence of ATG13.

The protein resides in the cytoplasm. It localises to the preautophagosomal structure. Autophagy factor required for autophagosome formation. Stabilizes ATG13, protecting it from proteasomal degradation. This chain is Autophagy-related protein 101 (ATG101), found in Bos taurus (Bovine).